A 947-amino-acid polypeptide reads, in one-letter code: Bifunctional glutamine synthetase adenylyltransferase/adenylyl-removing enzyme (947 aa).

An adenylyl removase region spans residues methionine 1 to glutamate 440. An adenylyl transferase region spans residues serine 450 to valine 947.

The protein belongs to the GlnE family. Mg(2+) is required as a cofactor.

The catalysed reaction is [glutamine synthetase]-O(4)-(5'-adenylyl)-L-tyrosine + phosphate = [glutamine synthetase]-L-tyrosine + ADP. It carries out the reaction [glutamine synthetase]-L-tyrosine + ATP = [glutamine synthetase]-O(4)-(5'-adenylyl)-L-tyrosine + diphosphate. Involved in the regulation of glutamine synthetase GlnA, a key enzyme in the process to assimilate ammonia. When cellular nitrogen levels are high, the C-terminal adenylyl transferase (AT) inactivates GlnA by covalent transfer of an adenylyl group from ATP to specific tyrosine residue of GlnA, thus reducing its activity. Conversely, when nitrogen levels are low, the N-terminal adenylyl removase (AR) activates GlnA by removing the adenylyl group by phosphorolysis, increasing its activity. The regulatory region of GlnE binds the signal transduction protein PII (GlnB) which indicates the nitrogen status of the cell. This is Bifunctional glutamine synthetase adenylyltransferase/adenylyl-removing enzyme from Salmonella paratyphi A (strain ATCC 9150 / SARB42).